The primary structure comprises 86 residues: Small ribosomal subunit protein uS15 (86 aa).

Belongs to the universal ribosomal protein uS15 family. Part of the 30S ribosomal subunit. Forms a bridge to the 50S subunit in the 70S ribosome, contacting the 23S rRNA.

One of the primary rRNA binding proteins, it binds directly to 16S rRNA where it helps nucleate assembly of the platform of the 30S subunit by binding and bridging several RNA helices of the 16S rRNA. In terms of biological role, forms an intersubunit bridge (bridge B4) with the 23S rRNA of the 50S subunit in the ribosome. The sequence is that of Small ribosomal subunit protein uS15 from Endomicrobium trichonymphae.